We begin with the raw amino-acid sequence, 485 residues long: Adenylate kinase 8 (485 aa).

Adenylate kinase stretches follow at residues 58-258 (PRVF…TFVL) and 269-472 (PRIL…YTVS). An ATP-binding site is contributed by 67 to 72 (ASGKHT). An NMP 1 region spans residues 87-113 (TPESVLSSDVSLLAKEAQSYRDKGQEV). AMP is bound by residues 140-143 (GFPK) and Gln-147. An LID 1 region spans residues 177–206 (GKRIDTANGEVYHTTFDWPSDPTVQRNLVE). Arg-218 provides a ligand contact to AMP. 278–283 (GSGRSL) provides a ligand contact to ATP. Residues 298–327 (CCGQVLKEAVADQTKLGEVIQPYIENDQQV) form an NMP 2 region. Residues 325–327 (QQV), 354–357 (GFPR), and Gln-361 contribute to the AMP site. Residues 391-424 (LCMTDPVSGERYHDIYKPAPSSEVHERLQQNPRH) form an LID 2 region. Arg-432 serves as a coordination point for AMP.

It belongs to the adenylate kinase family.

It localises to the cytoplasm. The protein localises to the cytosol. It carries out the reaction AMP + ATP = 2 ADP. It catalyses the reaction a 2'-deoxyribonucleoside 5'-diphosphate + ATP = a 2'-deoxyribonucleoside 5'-triphosphate + ADP. The enzyme catalyses a ribonucleoside 5'-diphosphate + ATP = a ribonucleoside 5'-triphosphate + ADP. Functionally, nucleoside monophosphate (NMP) kinase that catalyzes the reversible transfer of the terminal phosphate group between nucleoside triphosphates and monophosphates. Has highest activity toward AMP, and weaker activity toward dAMP, CMP and dCMP. Also displays broad nucleoside diphosphate kinase activity. The polypeptide is Adenylate kinase 8 (ak8) (Xenopus tropicalis (Western clawed frog)).